The primary structure comprises 249 residues: 3-deoxy-manno-octulosonate cytidylyltransferase (249 aa).

This sequence belongs to the KdsB family.

The protein localises to the cytoplasm. The enzyme catalyses 3-deoxy-alpha-D-manno-oct-2-ulosonate + CTP = CMP-3-deoxy-beta-D-manno-octulosonate + diphosphate. Its pathway is nucleotide-sugar biosynthesis; CMP-3-deoxy-D-manno-octulosonate biosynthesis; CMP-3-deoxy-D-manno-octulosonate from 3-deoxy-D-manno-octulosonate and CTP: step 1/1. It participates in bacterial outer membrane biogenesis; lipopolysaccharide biosynthesis. Activates KDO (a required 8-carbon sugar) for incorporation into bacterial lipopolysaccharide in Gram-negative bacteria. The sequence is that of 3-deoxy-manno-octulosonate cytidylyltransferase from Photorhabdus laumondii subsp. laumondii (strain DSM 15139 / CIP 105565 / TT01) (Photorhabdus luminescens subsp. laumondii).